The primary structure comprises 699 residues: LMBR1 domain-containing protein 2 homolog (699 aa).

Residues 1–3 are Extracellular-facing; it reads MAY. Residues 4–26 traverse the membrane as a helical segment; that stretch reads LLTFGIIAALCLASISLYRYGNI. Topologically, residues 27 to 30 are cytoplasmic; the sequence is PRQH. Residues 31–51 traverse the membrane as a helical segment; that stretch reads ILVTLSVLTAWCFSFLIVFTI. Over 52–106 the chain is Extracellular; it reads PLDVTSTLYRQCLAEHKLALDAAGNASTTANITPPPECQEPWGMVPESVFPNLWR. The N-linked (GlcNAc...) asparagine glycan is linked to Asn-76. Residues 107–127 traverse the membrane as a helical segment; that stretch reads IIYWSSQFLTWLIMPLMQSYL. The Cytoplasmic segment spans residues 128–144; sequence KAGDFTIKGKLKSALIE. The helical transmembrane segment at 145 to 165 threads the bilayer; that stretch reads NAIYYGSYLFICGVLLIYIAV. Over 166 to 181 the chain is Extracellular; sequence KGVPLDWQKLKAIASS. The chain crosses the membrane as a helical span at residues 182–202; sequence ASNTWGLFLLILLLGYALVEV. Over 203-381 the chain is Cytoplasmic; sequence PRSLWNNAKP…ECLLKAPFLK (179 aa). The chain crosses the membrane as a helical span at residues 382 to 402; it reads TLCVVTATMSAMVVWSEVTFF. Residues 403–426 lie on the Extracellular side of the membrane; it reads SRDPVLSIFANVIYLAKESYDFFT. A helical transmembrane segment spans residues 427 to 447; it reads IEVFSMMVLCYFFYCTYSTIL. Over 448–467 the chain is Cytoplasmic; sequence RIRFLNLYYLAPHHQTNEHS. A helical transmembrane segment spans residues 468–488; that stretch reads LIFSGMLLCRLTPPMCLNFLG. At 489–514 the chain is on the extracellular side; the sequence is LIHMDSHIIPERMMETYYTRIMGHMD. A helical transmembrane segment spans residues 515–535; sequence VIGIISNGFNIYFPMCMLAFC. Over 536–699 the chain is Cytoplasmic; sequence LSTWFSLGSR…PPPRGLFDDV (164 aa). Residues 564–592 adopt a coiled-coil conformation; that stretch reads ELVQEGKDLIAREKRRRQRAEEAMARRRD. Positions 669-699 are disordered; it reads FRGTSELDPDYEAENERRIVGPPPRGLFDDV.

Belongs to the LIMR family.

The protein localises to the membrane. The polypeptide is LMBR1 domain-containing protein 2 homolog (Drosophila pseudoobscura pseudoobscura (Fruit fly)).